We begin with the raw amino-acid sequence, 606 residues long: Zinc metalloproteinase-disintegrin-like HF3 (606 aa).

A signal peptide spans 1-20 (MIQVLLVTICLAAFPYQGSS). A propeptide spanning residues 21–190 (IILESGNVND…KKASQLVVTA (170 aa)) is cleaved from the precursor. A Peptidase M12B domain is found at 199-395 (KYIELVILAD…YKPQCILNEP (197 aa)). Glutamate 202 contributes to the Ca(2+) binding site. A glycan (N-linked (GlcNAc...) asparagine) is linked at asparagine 259. Position 286 (aspartate 286) interacts with Ca(2+). 3 cysteine pairs are disulfide-bonded: cysteine 310–cysteine 390, cysteine 350–cysteine 374, and cysteine 352–cysteine 357. N-linked (GlcNAc...) asparagine glycosylation is present at asparagine 313. Histidine 335 is a Zn(2+) binding site. Glutamate 336 is a catalytic residue. Zn(2+) contacts are provided by histidine 339 and histidine 345. A glycan (N-linked (GlcNAc...) asparagine) is linked at asparagine 373. Ca(2+)-binding residues include cysteine 390, asparagine 393, valine 405, asparagine 408, leucine 410, glutamate 412, glutamate 415, and aspartate 418. A Disintegrin domain is found at 403 to 489 (PPVCGNELLE…DCPTDDFKRN (87 aa)). Disulfide bonds link cysteine 406-cysteine 435, cysteine 417-cysteine 430, cysteine 419-cysteine 425, cysteine 429-cysteine 452, cysteine 443-cysteine 449, cysteine 448-cysteine 474, cysteine 461-cysteine 481, cysteine 468-cysteine 500, cysteine 493-cysteine 505, cysteine 512-cysteine 562, cysteine 527-cysteine 569, cysteine 540-cysteine 550, cysteine 557-cysteine 594, and cysteine 588-cysteine 599. Residues 467 to 469 (ECD) carry the D/ECD-tripeptide motif. Residues aspartate 469, glutamate 472, and aspartate 484 each coordinate Ca(2+). N-linked (GlcNAc...) asparagine glycosylation is present at asparagine 519. Residue asparagine 584 is glycosylated (N-linked (GlcNAc...) asparagine).

The protein belongs to the venom metalloproteinase (M12B) family. P-III subfamily. P-IIIa sub-subfamily. Monomer. The cofactor is Zn(2+). As to expression, expressed by the venom gland.

It is found in the secreted. In terms of biological role, the metalloproteinase-disintegrin-like HF3 is a potent hemorrhagic toxin that activates macrophages for phagocytosis through integrin alpha-M/beta-2 (ITGAM/ITGB2). It inhibits collagen-induced platelet aggregation. This protein shows cleavage specificity for substrate for leucine at P1' position, followed by hydrophobic residues in P2'. The chain is Zinc metalloproteinase-disintegrin-like HF3 from Bothrops jararaca (Jararaca).